Reading from the N-terminus, the 468-residue chain is tRNA (guanine(37)-N(1))-methyltransferase 1 (468 aa).

S-adenosyl-L-methionine contacts are provided by residues His-207, 245–246, and 273–274; these read DL and DA. Positions 301 to 348 are disordered; sequence KEAAVSRGGETNSSGEEIRESNASINEPLGANKKPSGTTKTENGVGKD. Residues 309–325 show a composition bias toward polar residues; that stretch reads GETNSSGEEIRESNASI. An S-adenosyl-L-methionine-binding site is contributed by Asn-380.

The protein belongs to the class I-like SAM-binding methyltransferase superfamily. TRM5/TYW2 family. As to quaternary structure, monomer.

The protein localises to the mitochondrion matrix. It localises to the nucleus. It is found in the cytoplasm. The enzyme catalyses guanosine(37) in tRNA + S-adenosyl-L-methionine = N(1)-methylguanosine(37) in tRNA + S-adenosyl-L-homocysteine + H(+). In terms of biological role, specifically methylates the N1 position of guanosine-37 in various cytoplasmic and mitochondrial tRNAs. Methylation is not dependent on the nature of the nucleoside 5' of the target nucleoside. This is the first step in the biosynthesis of wybutosine (yW), a modified base adjacent to the anticodon of tRNAs and required for accurate decoding. This Arabidopsis thaliana (Mouse-ear cress) protein is tRNA (guanine(37)-N(1))-methyltransferase 1.